Here is a 728-residue protein sequence, read N- to C-terminus: U-box domain-containing protein 4 (728 aa).

The region spanning 296–370 (SVPKEFSCPI…SQWCGVYGLQ (75 aa)) is the U-box domain. ARM repeat units follow at residues 441 to 483 (GAIP…EQEG) and 526 to 568 (GAVE…ESCA).

The catalysed reaction is S-ubiquitinyl-[E2 ubiquitin-conjugating enzyme]-L-cysteine + [acceptor protein]-L-lysine = [E2 ubiquitin-conjugating enzyme]-L-cysteine + N(6)-ubiquitinyl-[acceptor protein]-L-lysine.. The protein operates within protein modification; protein ubiquitination. Its function is as follows. Possesses E3 ubiquitin-protein ligase in vitro. In Oryza sativa subsp. japonica (Rice), this protein is U-box domain-containing protein 4 (PUB4).